We begin with the raw amino-acid sequence, 355 residues long: Probable nitronate monooxygenase (355 aa).

FMN is bound by residues asparagine 71, glutamine 175, glycine 180, glycine 218, and 237-240; that span reads QMGT.

The protein belongs to the nitronate monooxygenase family. NMO class I subfamily. Requires FMN as cofactor.

It carries out the reaction 3 propionate 3-nitronate + 3 O2 + H2O = 3 3-oxopropanoate + 2 nitrate + nitrite + H2O2 + 3 H(+). Nitronate monooxygenase that uses molecular oxygen to catalyze the oxidative denitrification of alkyl nitronates. Acts on propionate 3-nitronate (P3N), the presumed physiological substrate. Probably functions in the detoxification of P3N, a metabolic poison produced by plants and fungi as a defense mechanism. The protein is Probable nitronate monooxygenase of Staphylococcus aureus (strain MSSA476).